An 822-amino-acid polypeptide reads, in one-letter code: Sodium/hydrogen exchanger 1 (822 aa).

Topologically, residues 1–102 (MMLRWSGIWG…FPVLDIDYLH (102 aa)) are extracellular. Positions 41 to 73 (SPTANTIRGAEPPRERSIGDVTTAPSEPVHHPD) are disordered. A helical membrane pass occupies residues 103–125 (VRTPFEISLWILLACLMKIGFHV). Residues 126-134 (IPTISSIVP) are Cytoplasmic-facing. The chain crosses the membrane as a helical span at residues 135-152 (ESCLLIVVGLLVGGLIKG). Residues 153-162 (VGETPPFLQS) lie on the Extracellular side of the membrane. A helical membrane pass occupies residues 163–180 (DVFFLFLLPPIILDAGYF). At 181–190 (LPLRQFTENL) the chain is on the cytoplasmic side. The chain crosses the membrane as a helical span at residues 191–219 (GTILIFAVVGTLWNAFFLGGLLYAVCLVG). Residues 220-226 (GEQINNI) lie on the Extracellular side of the membrane. A helical membrane pass occupies residues 227-253 (GLLDTLLFGSIISAVDPVAVVAVFEEI). The Cytoplasmic portion of the chain corresponds to 254–256 (HIN). A helical membrane pass occupies residues 257–287 (ELLHILVFGESLLNDAVTVVLYHLFEEFANY). The Extracellular portion of the chain corresponds to 288 to 291 (DSIG). Residues 292–326 (ISDIFLGFLSFFVVALGGVFVGVVYGVIAAFTSRF) form a helical membrane-spanning segment. The Cytoplasmic segment spans residues 327-332 (TSHIRV). Residues 333–345 (IEPLFVFLYSYMA) traverse the membrane as a helical segment. Residues 346–354 (YLSAELFHL) are Extracellular-facing. Residues 355 to 375 (SGIMALIASGVVMRPYVEANI) traverse the membrane as a helical segment. Residues 376–377 (SH) lie on the Cytoplasmic side of the membrane. The helical transmembrane segment at 378–408 (KSHTTIKYFLKMWSSVSETLIFIFLGVSTVA) threads the bilayer. Topologically, residues 409-414 (GSHQWN) are extracellular. The helical transmembrane segment at 415-442 (WTFVISTLLFCLIARVLGVLVLTWFINK) threads the bilayer. Residues 443 to 448 (FRIVKL) lie on the Cytoplasmic side of the membrane. The chain crosses the membrane as a helical span at residues 449-473 (TPKDQFIIAYGGLRGAIAFSLGYLM). The Extracellular portion of the chain corresponds to 474–479 (DKKHFP). A helical transmembrane segment spans residues 480-509 (MCDLFLTAIITVIFFTVFVQGMTIRPLVDL). Residues 507-549 (VDLLAVKKKQETKRSINEEIHTQFLDHLLTGIEDICGHYGHHH) are interaction with TESC. Residues 510 to 822 (LAVKKKQETK…EGEPFIPKGE (313 aa)) are Cytoplasmic-facing. Residues 513–520 (KKKQETKR) form a PI(4,5)P2-binding region region. An interaction with CHP2 region spans residues 519-549 (KRSINEEIHTQFLDHLLTGIEDICGHYGHHH). The tract at residues 544-549 (HYGHHH) is confers pH-dependent PI(4,5)P2 binding. Residues 556 to 564 (RFNKKYVKK) form a PI(4,5)P2-binding region region. Phosphoserine is present on residues S603 and S606. Phosphothreonine is present on T607. A phosphoserine mark is found at S609 and S652. The tract at residues 637–822 (KILRSNLQKT…EGEPFIPKGE (186 aa)) is interaction with TESC. Positions 637–822 (KILRSNLQKT…EGEPFIPKGE (186 aa)) are interaction with CALM1. Residues 688 to 691 (LTVP) form an interaction with PPP3CA region. S697, S701, and S707 each carry phosphoserine. Positions 719 to 724 (PVITID) are interaction with PPP3CA. Phosphoserine occurs at positions 727, 730, and 733. The segment at 752–822 (PTRLTRGEED…EGEPFIPKGE (71 aa)) is disordered. T756 carries the post-translational modification Phosphothreonine. Acidic residues predominate over residues 759-768 (EEDEDEDEDG). T786 is subject to Phosphothreonine. S792, S794, and S803 each carry phosphoserine.

Belongs to the monovalent cation:proton antiporter 1 (CPA1) transporter (TC 2.A.36) family. Homodimer; dimerization is crucial for its function. Oligomer. Interacts with CALM in a calcium-dependent manner. Interacts with TESC. Interacts (via the juxtamembrane region of the cytoplasmic C-terminal domain) with CHP1; the interaction occurs at the plasma membrane in a calcium-dependent manner. Interacts with CHP2; the interaction occurs in a calcium-dependent manner. Interacts with EZR; regulates the cytoskeletal interactions of SLC9A1 and promotes stress fiber formation. In terms of processing, ubiquitinated, leading to its degradation by the proteasome. Ubiquitination is reduced by CHP1. Post-translationally, O-glycosylated. Palmitoylated; may play a major role in SLC9A1 regulation. In terms of processing, phosphorylation at Thr-786 increases SLC9A1 activity. Specifically dephosphorylated at Thr-786 by PPP3CA that negatively regulates SLC9A1 activity. Phosphorylation at Ser-652 by AKT1 reduces SLC9A1 binding to CALM1.

Its subcellular location is the cell membrane. The protein resides in the basolateral cell membrane. It catalyses the reaction Na(+)(in) + H(+)(out) = Na(+)(out) + H(+)(in). The enzyme catalyses Li(+)(out) + H(+)(in) = Li(+)(in) + H(+)(out). It carries out the reaction Li(+)(in) + Na(+)(out) = Li(+)(out) + Na(+)(in). Activated at acidic pHs. Inhibited by amiloride and 5-amino-substituted derivatives. Inhibited by cariporide and eniporide. Phosphatidylinositol 4,5-bisphosphate (PI(4,5)P2) and phosphatidylinositol 3,4,5-trisphosphate (PI(3,4,5)P3) bind and differentially regulate SLC9A1 activity. Its function is as follows. Electroneutral Na(+) /H(+) antiporter that extrudes Na(+) in exchange for external protons driven by the inward sodium ion chemical gradient, protecting cells from acidification that occurs from metabolism. Exchanges intracellular H(+) ions for extracellular Na(+) in 1:1 stoichiometry. Plays a key role in maintening intracellular pH neutral and cell volume, and thus is important for cell growth, proliferation, migration and survival. In addition, can transport lithium Li(+) and also functions as a Na(+)/Li(+) antiporter. SLC9A1 also functions in membrane anchoring and organization of scaffolding complexes that coordinate signaling inputs. In Cricetulus griseus (Chinese hamster), this protein is Sodium/hydrogen exchanger 1 (SLC9A1).